The sequence spans 116 residues: Protein Rev (116 aa).

A phosphoserine; by host CK2 mark is found at serine 5 and serine 8. The segment at 18–26 is homomultimerization; sequence LIKILYQSN. A disordered region spans residues 26 to 50; it reads NPYPKPNGSRQARRNRRRRWRARQN. Residues 34 to 50 carry the Nuclear localization signal and RNA-binding (RRE) motif; it reads SRQARRNRRRRWRARQN. Residues 36–47 are compositionally biased toward basic residues; it reads QARRNRRRRWRA. The Nuclear export signal and binding to XPO1 signature appears at 73 to 84; the sequence is LQLPPIERLRLD. The segment at 91-116 is disordered; that stretch reads NSGTQGVGDPQISGEPCMVLGAGTKE. Residue serine 92 is modified to Phosphoserine; by host.

The protein belongs to the HIV-1 REV protein family. Homomultimer; when bound to the RRE. Multimeric assembly is essential for activity and may involve XPO1. Binds to human KPNB1, XPO1, TNPO1, RANBP5 and IPO7. Interacts with the viral Integrase. Interacts with human KHDRBS1. Interacts with human NAP1; this interaction decreases Rev multimerization and stimulates its activity. Interacts with human DEAD-box helicases DDX3 and DDX24; these interactions may serve for viral RNA export to the cytoplasm and packaging, respectively. Interacts with human PSIP1; this interaction may inhibit HIV-1 DNA integration by promoting dissociation of the Integrase-LEDGF/p75 complex. In terms of processing, asymmetrically arginine dimethylated at one site by host PRMT6. Methylation impairs the RNA-binding activity and export of viral RNA from the nucleus to the cytoplasm. Phosphorylated by protein kinase CK2. Presence of, and maybe binding to the N-terminus of the regulatory beta subunit of CK2 is necessary for CK2-mediated Rev's phosphorylation.

The protein localises to the host nucleus. Its subcellular location is the host nucleolus. The protein resides in the host cytoplasm. Its function is as follows. Escorts unspliced or incompletely spliced viral pre-mRNAs (late transcripts) out of the nucleus of infected cells. These pre-mRNAs carry a recognition sequence called Rev responsive element (RRE) located in the env gene, that is not present in fully spliced viral mRNAs (early transcripts). This function is essential since most viral proteins are translated from unspliced or partially spliced pre-mRNAs which cannot exit the nucleus by the pathway used by fully processed cellular mRNAs. Rev itself is translated from a fully spliced mRNA that readily exits the nucleus. Rev's nuclear localization signal (NLS) binds directly to KPNB1/Importin beta-1 without previous binding to KPNA1/Importin alpha-1. KPNB1 binds to the GDP bound form of RAN (Ran-GDP) and targets Rev to the nucleus. In the nucleus, the conversion from Ran-GDP to Ran-GTP dissociates Rev from KPNB1 and allows Rev's binding to the RRE in viral pre-mRNAs. Rev multimerization on the RRE via cooperative assembly exposes its nuclear export signal (NES) to the surface. Rev can then form a complex with XPO1/CRM1 and Ran-GTP, leading to nuclear export of the complex. Conversion from Ran-GTP to Ran-GDP mediates dissociation of the Rev/RRE/XPO1/RAN complex, so that Rev can return to the nucleus for a subsequent round of export. Beside KPNB1, also seems to interact with TNPO1/Transportin-1, RANBP5/IPO5 and IPO7/RANBP7 for nuclear import. The nucleoporin-like HRB/RIP is an essential cofactor that probably indirectly interacts with Rev to release HIV RNAs from the perinuclear region to the cytoplasm. The polypeptide is Protein Rev (Homo sapiens (Human)).